We begin with the raw amino-acid sequence, 116 residues long: uncharacterized protein (116 aa).

Transmembrane regions (helical) follow at residues 24–44 (VPFA…VLTA) and 70–90 (VILT…IILS).

The protein resides in the membrane. This is an uncharacterized protein from Saccharomyces cerevisiae (strain ATCC 204508 / S288c) (Baker's yeast).